The primary structure comprises 360 residues: MKSSIVAKLEALQERHEEVLAHLGDANVIADQDRFRALSREYAQLTDVTRCFKEWRSVQDDIEAAEMMLDDPEMREMAQDELKEAKARSEELEQQLQVLLLPKDPDDERDCFLEIRAGTGGDEAAIFAGDMFRMYSRYAEARRWKVEIMSASEGEHGGYKEVIAKVSGDGVFGQLKFESGGHRVQRVPETESQGRIHTSACTVAVMPAIPEAEMPEINAGDLRIDTFRSSGAGGQHVNTTDSAIRITHIPTGIVVECQDERSQHKNKAKAMSVLGARIRAAEMQKRQQAEASERRNLLGSGDRSDRNRTYNFPQGRVTDHRINLTLYRLDEVMEGKLDMLIQPIVQEYQADQLSALSEQD.

N5-methylglutamine is present on Gln-235. Basic and acidic residues predominate over residues 283–308; it reads MQKRQQAEASERRNLLGSGDRSDRNR. Residues 283–313 form a disordered region; sequence MQKRQQAEASERRNLLGSGDRSDRNRTYNFP.

Belongs to the prokaryotic/mitochondrial release factor family. In terms of processing, methylated by PrmC. Methylation increases the termination efficiency of RF1.

The protein localises to the cytoplasm. Its function is as follows. Peptide chain release factor 1 directs the termination of translation in response to the peptide chain termination codons UAG and UAA. The polypeptide is Peptide chain release factor 1 (Yersinia enterocolitica serotype O:8 / biotype 1B (strain NCTC 13174 / 8081)).